We begin with the raw amino-acid sequence, 390 residues long: DNA polymerase IV (390 aa).

The UmuC domain maps to 6-187 (VMHVDLDAFF…LDIAVMPGIG (182 aa)). Asp-10 and Asp-105 together coordinate Mg(2+). Glu-106 is an active-site residue.

This sequence belongs to the DNA polymerase type-Y family. Monomer. Mg(2+) serves as cofactor.

It localises to the cytoplasm. It catalyses the reaction DNA(n) + a 2'-deoxyribonucleoside 5'-triphosphate = DNA(n+1) + diphosphate. Functionally, poorly processive, error-prone DNA polymerase involved in untargeted mutagenesis. Copies undamaged DNA at stalled replication forks, which arise in vivo from mismatched or misaligned primer ends. These misaligned primers can be extended by PolIV. Exhibits no 3'-5' exonuclease (proofreading) activity. May be involved in translesional synthesis, in conjunction with the beta clamp from PolIII. In Dehalococcoides mccartyi (strain ATCC BAA-2100 / JCM 16839 / KCTC 5957 / BAV1), this protein is DNA polymerase IV.